The chain runs to 229 residues: Small ribosomal subunit protein uS3 (229 aa).

Residues 17–85 (VKEWIKDEVR…NPQVSVDEVE (69 aa)) enclose the KH type-2 domain. Residues 202-229 (LRGESGEDEGDKGDEQGGEAQEAEGAGA) are disordered. Residues 219 to 229 (GEAQEAEGAGA) are compositionally biased toward low complexity.

It belongs to the universal ribosomal protein uS3 family. In terms of assembly, part of the 30S ribosomal subunit.

Functionally, binds the lower part of the 30S subunit head. The chain is Small ribosomal subunit protein uS3 from Archaeoglobus fulgidus (strain ATCC 49558 / DSM 4304 / JCM 9628 / NBRC 100126 / VC-16).